Reading from the N-terminus, the 377-residue chain is Citrate synthase (377 aa).

Active-site residues include His-220, His-259, and Asp-313.

The protein belongs to the citrate synthase family. In terms of assembly, homodimer.

It catalyses the reaction oxaloacetate + acetyl-CoA + H2O = citrate + CoA + H(+). Its pathway is carbohydrate metabolism; tricarboxylic acid cycle; isocitrate from oxaloacetate: step 1/2. Functionally, might regulate the synthesis and function of enzymes involved in later enzymatic steps of Krebs cycle. Loss in activity results in sporulation defect. The polypeptide is Citrate synthase (gltA) (Deinococcus radiodurans (strain ATCC 13939 / DSM 20539 / JCM 16871 / CCUG 27074 / LMG 4051 / NBRC 15346 / NCIMB 9279 / VKM B-1422 / R1)).